Reading from the N-terminus, the 499-residue chain is MAEKYILALDQGTTSSRAIIFNQAGETVCMVNQEFPQLYPEPGWVEHDPVDIIESQISVAKKAIEIASINPDQIAAIGVTNQRETTIVWDKNTSKPVYNAIVWQCRRTASMCDQFKKLGYEDTIRKKTGLVLDAYFSATKLKWILDNVEGARQKAERGELLFGTVDSWLIWNLTGGKIHATDYSNASRTMLFNIHSLNWDEELLELFNIPEQMLPDVLPSSTVYGYTHKEIFGVEIPICGNAGDQQAALFGQICCEPGMVKNTYGTGCFILMNTGNKIVDSKHGLLTTIGWVLNDKSMCYALEGSVFSAGATVQWLRDGLKIVEKASDTEYLAKSVKDSAGVYFVPAFVGLGAPYWDMYARGTIIGITRGCTREHIVRAALESIAYQTRDVVEVMSEESGIKLHCLRVDGGASANDFLMQFQADILGVPVERPTVSETTALGAAYLAGLAVGYWKDHSEIKKQWRLDRRFEPQMDPETREELYKKWKNAVTRSLGWVEK.

ADP is bound at residue T13. Residues T13, T14, and S15 each contribute to the ATP site. A sn-glycerol 3-phosphate-binding site is contributed by T13. R17 is an ADP binding site. 4 residues coordinate sn-glycerol 3-phosphate: R83, E84, Y135, and D244. 5 residues coordinate glycerol: R83, E84, Y135, D244, and Q245. ADP contacts are provided by T266 and G310. T266, G310, Q314, and G411 together coordinate ATP. Residues G411 and N415 each contribute to the ADP site.

The protein belongs to the FGGY kinase family.

The enzyme catalyses glycerol + ATP = sn-glycerol 3-phosphate + ADP + H(+). The protein operates within polyol metabolism; glycerol degradation via glycerol kinase pathway; sn-glycerol 3-phosphate from glycerol: step 1/1. With respect to regulation, inhibited by fructose 1,6-bisphosphate (FBP). Its function is as follows. Key enzyme in the regulation of glycerol uptake and metabolism. Catalyzes the phosphorylation of glycerol to yield sn-glycerol 3-phosphate. The protein is Glycerol kinase of Pseudothermotoga lettingae (strain ATCC BAA-301 / DSM 14385 / NBRC 107922 / TMO) (Thermotoga lettingae).